Reading from the N-terminus, the 464-residue chain is Interstitial collagenase A (464 aa).

Residues 1–17 (MPSLPLLLLLWAASSYS) form the signal peptide. Residues 18–96 (FPVFHNGDRQ…PRCGVPDVAP (79 aa)) constitute a propeptide, activation peptide. The Cysteine switch motif lies at 87-94 (PRCGVPDV). A Zn(2+)-binding site is contributed by cysteine 89. Residues 95–274 (APYAITHNNP…IQPTGATTPH (180 aa)) form a metalloprotease region. Aspartate 155 is a Ca(2+) binding site. The Zn(2+) site is built by histidine 165 and aspartate 167. Residues aspartate 172 and glycine 173 each contribute to the Ca(2+) site. A Zn(2+)-binding site is contributed by histidine 180. Glycine 187, glycine 189, and aspartate 191 together coordinate Ca(2+). Residue histidine 193 coordinates Zn(2+). 2 residues coordinate Ca(2+): aspartate 195 and glutamate 198. Residue asparagine 202 is glycosylated (N-linked (GlcNAc...) asparagine). Histidine 215 serves as a coordination point for Zn(2+). Glutamate 216 is an active-site residue. Zn(2+) is bound by residues histidine 219 and histidine 225. 2 Hemopexin repeats span residues 273–322 (PHPC…WPNL) and 323–369 (PVKL…FGFP). Cysteines 276 and 464 form a disulfide. Aspartate 283 provides a ligand contact to Ca(2+). Asparagine 371 carries N-linked (GlcNAc...) asparagine glycosylation. Hemopexin repeat units follow at residues 372–420 (VTHI…FPGI) and 421–464 (DDKV…WFNC). Residues aspartate 376 and aspartate 425 each contribute to the Ca(2+) site.

Belongs to the peptidase M10A family. The cofactor is Ca(2+). Requires Zn(2+) as cofactor.

It is found in the secreted. The protein localises to the extracellular space. The protein resides in the extracellular matrix. It carries out the reaction Cleavage of the triple helix of collagen at about three-quarters of the length of the molecule from the N-terminus, at 775-Gly-|-Ile-776 in the alpha1(I) chain. Cleaves synthetic substrates and alpha-macroglobulins at bonds where P1' is a hydrophobic residue.. Its activity is regulated as follows. Can be activated without removal of the activation peptide. Functionally, cleaves collagens of types I, II, and III at one site in the helical domain. Also cleaves collagens of types VII and X. Able to degrade synthetic peptides and type I and II fibrillar collagen. This chain is Interstitial collagenase A (Mmp1a), found in Mus musculus (Mouse).